Here is a 137-residue protein sequence, read N- to C-terminus: Holo-[acyl-carrier-protein] synthase (137 aa).

The Mg(2+) site is built by Asp8 and Glu57.

Belongs to the P-Pant transferase superfamily. AcpS family. It depends on Mg(2+) as a cofactor.

Its subcellular location is the cytoplasm. It carries out the reaction apo-[ACP] + CoA = holo-[ACP] + adenosine 3',5'-bisphosphate + H(+). Its function is as follows. Transfers the 4'-phosphopantetheine moiety from coenzyme A to a Ser of acyl-carrier-protein. The sequence is that of Holo-[acyl-carrier-protein] synthase from Mesorhizobium japonicum (strain LMG 29417 / CECT 9101 / MAFF 303099) (Mesorhizobium loti (strain MAFF 303099)).